We begin with the raw amino-acid sequence, 333 residues long: Perchlorate reductase subunit beta (333 aa).

In terms of domain architecture, 4Fe-4S ferredoxin-type 1 spans 12–40; sequence LTYVTDLNKCIGCQTCTVACKKLWTTGPG. 4 residues coordinate [4Fe-4S] cluster: Cys-21, Cys-24, Cys-27, and Cys-31. Residues 101 to 121 are disordered; that stretch reads KERVRPSPTPRSAPNWDEDQG. 2 consecutive 4Fe-4S ferredoxin-type domains span residues 128 to 159 and 161 to 190; these read NSFFYLPRMCNHCTKPACLEACPNEAIYKREQ and GIVVIHQDKCKGAQACVQSCPYAKPYFNPV. [4Fe-4S] cluster is bound by residues Cys-137, Cys-140, and Cys-145. [3Fe-4S] cluster-binding residues include Cys-149, Cys-170, and Cys-176. [4Fe-4S] cluster-binding residues include Cys-180, Cys-197, Cys-200, Cys-212, and Cys-216.

Heterotrimer of alpha, beta and gamma subunits. The cofactor is [3Fe-4S] cluster. Requires [4Fe-4S] cluster as cofactor.

The protein resides in the periplasm. Component of the perchlorate reductase that catalyzes the reduction of perchlorate to chlorite and allows anaerobic growth on perchlorate as the sole electron acceptor. The beta subunit may be responsible for electron transfer to the catalytic alpha subunit PcrA. The polypeptide is Perchlorate reductase subunit beta (pcrB) (Dechloromonas aromatica (strain RCB)).